The primary structure comprises 313 residues: DDRGK domain-containing protein 1 (313 aa).

Residues 1–28 (MVSPVVYLVVAALLVGLILFLTRGRGRA) form a helical membrane-spanning segment. Positions 1 to 113 (MVSPVVYLVV…IEKPVETHLS (113 aa)) are mediates interaction with CDK5RAP3. Over 29–313 (AAAAQEPLHN…GRETPAQAPA (285 aa)) the chain is Cytoplasmic. A disordered region spans residues 40-88 (EVPAAAGRVARPQPLEPEEQRAAGRPRRRRDLGSRLQAQRRAQRVAWAD). Ser-73 and Ser-113 each carry phosphoserine. Positions 73–87 (SRLQAQRRAQRVAWA) are enriched in low complexity. The segment at 117 to 215 (GAKKLRKLEE…MTEEQSHSFL (99 aa)) is mediates interaction with TRIP4. Residues 130-185 (RKAQREAEEAEREERKRLESQREAEWKKEEERLRLEEEQKEEEERKAQEEQAQREH) form a disordered region. The UFM1-interacting motif (UFIM) signature appears at 194 to 208 (TFVVVEEGVGETMTE). Residues 215 to 313 (LAEFINYIKQ…GRETPAQAPA (99 aa)) are mediates interaction with UFL1. One can recognise a PCI domain in the interval 228–272 (VLLEDLASQVGLRTQDTINRIQDLLAEGTLTGVIDDRGKFIYITP). Lys-266 participates in a covalent cross-link: Glycyl lysine isopeptide (Lys-Gly) (interchain with G-Cter in UFM1).

The protein belongs to the DDRGK1 family. As to quaternary structure, component of the UFM1 ribosome E3 ligase (UREL) complex, composed of UFL1, DDRGK1 and CDK5RAP3. Interacts with (unphosphorylated) ERN1/IRE1-alpha; interaction is dependent on UFM1 and takes place in response to endoplasmic reticulum stress, regulating ERN1/IRE1-alpha stability. Interacts with NFKBIA. Interacts with SOX9. Post-translationally, ubiquitinated. Ubiquitination probably triggers proteasomal degradation and is negatively regulated by UFL1, the enzyme involved in the ufmylation of DDRGK1. In terms of processing, ufmylated; conjugated to ubiquitin-like protein UFM1, probably at Lys-266 by UFL1. The relevance of ufmylation is however unclear: as DDRGK1 acts as a substrate adapter for ufmylation, it is uncertain whether ufmylation is a collateral effect of the ufmylation process or whether it is required to regulate its activity.

The protein localises to the endoplasmic reticulum membrane. In terms of biological role, component of the UFM1 ribosome E3 ligase (UREL) complex, a multiprotein complex that catalyzes ufmylation of endoplasmic reticulum-docked proteins. The UREL complex plays a key role in ribosome recycling by mediating mono-ufmylation of the RPL26/uL24 subunit of the 60S ribosome following ribosome dissociation: ufmylation weakens the junction between post-termination 60S subunits and SEC61 translocons, promoting release and recycling of the large ribosomal subunit from the endoplasmic reticulum membrane. Ufmylation of RPL26/uL24 and subsequent 60S ribosome recycling either take place after normal termination of translation or after ribosome stalling during cotranslational translocation at the endoplasmic reticulum. Within the UREL complex, DDRGK1 tethers the complex to the endoplasmic reticulum membrane to restrict its activity to endoplasmic reticulum-docked ribosomes and acts as an ufmylation 'reader': following RPL26/uL24 ufmylation, DDRGK1 specifically binds to ufmylated RPL26/uL24 via its UFIM motif, resulting in stable association between the 60S ribosome and the UREL complex, followed by dissociation of the 60S ribosome subunit from the endoplasmic reticulum membrane. The UREL complex is also involved in reticulophagy in response to endoplasmic reticulum stress by promoting ufmylation of proteins such as CYB5R3 and RPN1, thereby promoting lysosomal degradation of ufmylated proteins. Ufmylation-dependent reticulophagy inhibits the unfolded protein response (UPR) by regulating ERN1/IRE1-alpha stability. Acts as a regulator of immunity by promoting differentiation of B-cells into plasma cells: acts by promoting expansion of the endoplasmic reticulum and regulating the unfolded protein response (UPR). May also be required for TRIP4 ufmylation. May play a role in NF-kappa-B-mediated transcription through regulation of the phosphorylation and the degradation of NFKBIA, the inhibitor of NF-kappa-B. Plays a role in cartilage development through SOX9, inhibiting the ubiquitin-mediated proteasomal degradation of this transcriptional regulator. Required for stabilization and ufmylation of ATG9A. The protein is DDRGK domain-containing protein 1 of Bos taurus (Bovine).